Reading from the N-terminus, the 283-residue chain is D-alanine aminotransferase (283 aa).

Tyrosine 31 serves as a coordination point for substrate. Arginine 50 is a binding site for pyridoxal 5'-phosphate. The substrate site is built by arginine 98 and histidine 100. Lysine 144 (proton acceptor) is an active-site residue. Residue lysine 144 is modified to N6-(pyridoxal phosphate)lysine. Glutamate 176 serves as a coordination point for pyridoxal 5'-phosphate.

It belongs to the class-IV pyridoxal-phosphate-dependent aminotransferase family. In terms of assembly, homodimer. The cofactor is pyridoxal 5'-phosphate.

It catalyses the reaction D-alanine + 2-oxoglutarate = D-glutamate + pyruvate. In terms of biological role, acts on the D-isomers of alanine, leucine, aspartate, glutamate, aminobutyrate, norvaline and asparagine. The enzyme transfers an amino group from a substrate D-amino acid to the pyridoxal phosphate cofactor to form pyridoxamine and an alpha-keto acid in the first half-reaction. The second half-reaction is the reverse of the first, transferring the amino group from the pyridoxamine to a second alpha-keto acid to form the product D-amino acid via a ping-pong mechanism. This is an important process in the formation of D-alanine and D-glutamate, which are essential bacterial cell wall components. The chain is D-alanine aminotransferase (dat) from Bacillus licheniformis.